The sequence spans 246 residues: Triosephosphate isomerase (246 aa).

A substrate-binding site is contributed by 9–11 (NWK). The active-site Electrophile is the histidine 99. The Proton acceptor role is filled by glutamate 168. Substrate contacts are provided by residues glycine 174, serine 207, and 228–229 (GG).

The protein belongs to the triosephosphate isomerase family. As to quaternary structure, homodimer.

It is found in the cytoplasm. It carries out the reaction D-glyceraldehyde 3-phosphate = dihydroxyacetone phosphate. The protein operates within carbohydrate biosynthesis; gluconeogenesis. Its pathway is carbohydrate degradation; glycolysis; D-glyceraldehyde 3-phosphate from glycerone phosphate: step 1/1. Functionally, involved in the gluconeogenesis. Catalyzes stereospecifically the conversion of dihydroxyacetone phosphate (DHAP) to D-glyceraldehyde-3-phosphate (G3P). In Prochlorococcus marinus (strain NATL2A), this protein is Triosephosphate isomerase.